Consider the following 65-residue polypeptide: Large ribosomal subunit protein bL35 (65 aa).

The protein belongs to the bacterial ribosomal protein bL35 family.

The protein is Large ribosomal subunit protein bL35 of Enterobacter sp. (strain 638).